The sequence spans 616 residues: Protein RIK (616 aa).

The span at 1–11 shows a compositional bias: basic and acidic residues; that stretch reads MTEDRAHKVAD. The disordered stretch occupies residues 1-32; it reads MTEDRAHKVADEPAASGRQSPERKKRKWDQPA. Residues 198–304 form the KH domain; the sequence is GTTSESISVP…AKVLAENLLD (107 aa). 3 stretches are compositionally biased toward polar residues: residues 432 to 449, 475 to 484, and 491 to 502; these read TQAV…TKGN, TESQNSQQGS, and LDSSGNIGSSSI. Disordered stretches follow at residues 432–455 and 467–616; these read TQAV…LDAE and LPVS…HTCV. Residues 534 to 564 are compositionally biased toward pro residues; that stretch reads LPPPLKSMLPLPPRSMPPPPPKSMPPPPPKF. 2 stretches are compositionally biased toward basic and acidic residues: residues 565 to 575 and 598 to 610; these read PSDEFLSRNEN and SERR…EEKN.

As to quaternary structure, interacts with RS2. As to expression, expressed in vegetative tissues. More abundant in apices and young leaf primordia than in fully expanded leaf tissues.

The protein localises to the nucleus. This Zea mays (Maize) protein is Protein RIK.